The sequence spans 5088 residues: Replicase polyprotein 1ab (5088 aa).

Residues 26–46 form a helical membrane-spanning segment; that stretch reads VTNVIQYWTPILTMLLLAIYI. Residues 301-323 form a disordered region; the sequence is EIEDDTEAEETQKTKRKGKLQPQ. Transmembrane regions (helical) follow at residues 343 to 363, 1132 to 1152, 1156 to 1176, 1201 to 1221, and 1250 to 1270; these read HLTF…MSPT, GLFL…AITI, TMMM…HLLL, YGCL…LAYI, and ILIP…VSYV. Active-site for 3C-like proteinase residues include histidine 1434 and cysteine 1539. The next 2 helical transmembrane spans lie at 1729–1749 and 1758–1778; these read FTHT…LFFV and ILSS…YGLV. The disordered stretch occupies residues 3093–3112; the sequence is KPNCPMVPSEVPVRNKHKSA. Positions 4351–4616 constitute an ExoN domain; sequence MNIVMDDCIC…MTQCIYQSFV (266 aa). Active-site residues include aspartate 4362, glutamate 4364, and aspartate 4481. Cysteine 4498, cysteine 4504, cysteine 4522, and histidine 4525 together coordinate Zn(2+). Catalysis depends on residues histidine 4599, aspartate 4604, lysine 4880, aspartate 4969, lysine 4998, and glutamate 5035. A Nidovirus-type SAM-dependent 2'-O-MTase domain is found at 4844–5088; it reads LNNHAALAKA…RQSVFRYSPK (245 aa).

As to quaternary structure, homodimer. In terms of processing, specific enzymatic cleavages in vivo by its own protease yield mature proteins. 3CL-PRO is autocatalytically processed.

It localises to the membrane. It catalyses the reaction a 5'-end (5'-triphosphoguanosine)-ribonucleoside in mRNA + S-adenosyl-L-methionine = a 5'-end (N(7)-methyl 5'-triphosphoguanosine)-ribonucleoside in mRNA + S-adenosyl-L-homocysteine. The enzyme catalyses RNA(n) + a ribonucleoside 5'-triphosphate = RNA(n+1) + diphosphate. The catalysed reaction is ATP + H2O = ADP + phosphate + H(+). It carries out the reaction a 5'-end (N(7)-methyl 5'-triphosphoguanosine)-ribonucleoside in mRNA + S-adenosyl-L-methionine = a 5'-end (N(7)-methyl 5'-triphosphoguanosine)-(2'-O-methyl-ribonucleoside) in mRNA + S-adenosyl-L-homocysteine + H(+). Functionally, cysteine protease responsible for the majority of cleavages of the polyprotein. Recognizes substrates containing the core sequence [NT]-[EHKQSY]-|-[AGNST]. Its function is as follows. The helicase which contains a zinc finger structure displays RNA and DNA duplex-unwinding activities with 5' to 3' polarity. In terms of biological role, RNA-directed RNA polymerase that catalyzes the transcription of viral genomic and subgenomic RNAs. Catalyzes the RNA N7-guanylyltransferase reaction to methylate the core cap structure GpppN-RNA into the type-0 cap (m)GpppN-RNA. In Ochlerotatus harrisoni (CAVV), this protein is Replicase polyprotein 1ab.